Here is a 347-residue protein sequence, read N- to C-terminus: MNPLVFTMIMSTVMLGTAIVATSSHWLMAWIGFEMNMLAVIPILMKKYNPRSMEASTKYFLTQATASMLLMLAVTMNLVYSGQWSITKPLNPTASTIMTLAMAMKLGLSPFHFWVPEVTQGISLPSGLILLTWQKLAPMSILYQISPPINLDLLMMLINLSIAIGGWGGLNQTQLRKIMAYSSIAHMGWMTAILTYNPTMTLLNLMIYILLTTTTFMMFMLSSTTTTLSLSHTWNKMPLLTTAILLTMLSLGGLPPLSGFMPKWMIIQELTKNNSVIMPTTMAVMALLNLYFYMRLTYSTSLTMFPSTNNMKMKWQFNYTKSTTHLSPLIILSTLILPLSPMLALLE.

10 helical membrane-spanning segments follow: residues 1–21 (MNPL…AIVA), 25–45 (HWLM…PILM), 59–79 (YFLT…MNLV), 111–131 (FHFW…LILL), 149–169 (INLD…GWGG), 178–198 (IMAY…TYNP), 201–221 (TLLN…MFML), 237–257 (MPLL…LPPL), 274–294 (NSVI…YFYM), and 326–346 (LSPL…LALL).

It belongs to the complex I subunit 2 family. Core subunit of respiratory chain NADH dehydrogenase (Complex I) which is composed of 45 different subunits. Interacts with TMEM242.

It localises to the mitochondrion inner membrane. It carries out the reaction a ubiquinone + NADH + 5 H(+)(in) = a ubiquinol + NAD(+) + 4 H(+)(out). Its function is as follows. Core subunit of the mitochondrial membrane respiratory chain NADH dehydrogenase (Complex I) which catalyzes electron transfer from NADH through the respiratory chain, using ubiquinone as an electron acceptor. Essential for the catalytic activity and assembly of complex I. The polypeptide is NADH-ubiquinone oxidoreductase chain 2 (Pteropus rodricensis (Rodriguez flying fox)).